Consider the following 359-residue polypeptide: 3-dehydroquinate synthase (359 aa).

Residues 71-76, 105-109, 129-130, Lys-142, and Lys-151 contribute to the NAD(+) site; these read DGEAYK, GVIGD, and TT. The Zn(2+) site is built by Glu-184, His-247, and His-264.

The protein belongs to the sugar phosphate cyclases superfamily. Dehydroquinate synthase family. The cofactor is Co(2+). It depends on Zn(2+) as a cofactor. NAD(+) is required as a cofactor.

Its subcellular location is the cytoplasm. It carries out the reaction 7-phospho-2-dehydro-3-deoxy-D-arabino-heptonate = 3-dehydroquinate + phosphate. Its pathway is metabolic intermediate biosynthesis; chorismate biosynthesis; chorismate from D-erythrose 4-phosphate and phosphoenolpyruvate: step 2/7. Functionally, catalyzes the conversion of 3-deoxy-D-arabino-heptulosonate 7-phosphate (DAHP) to dehydroquinate (DHQ). This is 3-dehydroquinate synthase from Burkholderia ambifaria (strain ATCC BAA-244 / DSM 16087 / CCUG 44356 / LMG 19182 / AMMD) (Burkholderia cepacia (strain AMMD)).